The primary structure comprises 523 residues: MTPARVVFICCVVLLAAAAAAASSSTAAGITRADFPPEFIFGAGSSAYQVEGAFAEDGRKPSIWDTFSHSGYSVDGATGDVTADQYHKYKEDVKLLQDMGVDAYRMSISWSRLIPDGRGAVNPKGLEYYNNLIDELLSHGIQPHVTIYHFDFPQALQDEYNGILSPRFVEDFTAYADVCFKNFGDRVKHWSTVNEPNIEPIGGYDQGILPPRRCSFPFGVLSCDNGNSTTEPYIVAHHLLLAHSSAVSLYREKYQATQGGQIGLTLLGWWYEPGTQDPEDVAAAARMNDFHIGWYMHPLVYGDYPPVMRKNVGSRLPSFTAEESKRVLESYDFVGFNHYVAIFVRADLSKLDQSLRDYMGDAAVKYDLPFLKSNNEFPLGLTSDFMTSTPWALKKMLNHLQEKYKNPIVMIHENGAAGQPDPSGGNTYDDDFRSQYLQDYIEATLQSIRNGSNVQGYFVWSFLDVFEYLFGYRLRFGLYGVDFASPERTRYQRHSARWYAGFLRGGELRPAAAALAGGGAYSQ.

The signal sequence occupies residues 1–22 (MTPARVVFICCVVLLAAAAAAA). A beta-D-glucoside-binding positions include Gln49, His149, and 194–195 (NE). Glu195 (proton donor) is an active-site residue. A disulfide bridge connects residues Cys214 and Cys223. A glycan (N-linked (GlcNAc...) asparagine) is linked at Asn227. A beta-D-glucoside-binding residues include Tyr339 and Glu413. Glu413 acts as the Nucleophile in catalysis. A glycan (N-linked (GlcNAc...) asparagine) is linked at Asn450. A beta-D-glucoside contacts are provided by residues Trp460, 467–468 (EY), and Phe476.

This sequence belongs to the glycosyl hydrolase 1 family.

The catalysed reaction is Hydrolysis of terminal, non-reducing beta-D-glucosyl residues with release of beta-D-glucose.. This chain is Beta-glucosidase 31 (BGLU31), found in Oryza sativa subsp. japonica (Rice).